The sequence spans 101 residues: Small ribosomal subunit protein bS18c (101 aa).

It belongs to the bacterial ribosomal protein bS18 family. Part of the 30S ribosomal subunit.

Its subcellular location is the plastid. It is found in the chloroplast. The polypeptide is Small ribosomal subunit protein bS18c (Eucalyptus globulus subsp. globulus (Tasmanian blue gum)).